The sequence spans 341 residues: D-erythrose-4-phosphate dehydrogenase (341 aa).

An NAD(+)-binding site is contributed by 12 to 13; it reads RI. Residues 154–156, R200, 213–214, and R236 contribute to the substrate site; these read SCT and TK. Residue C155 is the Nucleophile of the active site. Position 318 (N318) interacts with NAD(+).

The protein belongs to the glyceraldehyde-3-phosphate dehydrogenase family. Epd subfamily. Homotetramer.

Its subcellular location is the cytoplasm. It carries out the reaction D-erythrose 4-phosphate + NAD(+) + H2O = 4-phospho-D-erythronate + NADH + 2 H(+). It functions in the pathway cofactor biosynthesis; pyridoxine 5'-phosphate biosynthesis; pyridoxine 5'-phosphate from D-erythrose 4-phosphate: step 1/5. Functionally, catalyzes the NAD-dependent conversion of D-erythrose 4-phosphate to 4-phosphoerythronate. The chain is D-erythrose-4-phosphate dehydrogenase from Edwardsiella ictaluri (strain 93-146).